A 303-amino-acid polypeptide reads, in one-letter code: Acetylglutamate kinase (303 aa).

Substrate contacts are provided by residues 69–70, R91, and N190; that span reads GG.

It belongs to the acetylglutamate kinase family. ArgB subfamily.

It localises to the cytoplasm. It carries out the reaction N-acetyl-L-glutamate + ATP = N-acetyl-L-glutamyl 5-phosphate + ADP. Its pathway is amino-acid biosynthesis; L-arginine biosynthesis; N(2)-acetyl-L-ornithine from L-glutamate: step 2/4. In terms of biological role, catalyzes the ATP-dependent phosphorylation of N-acetyl-L-glutamate. The polypeptide is Acetylglutamate kinase (Nocardia farcinica (strain IFM 10152)).